A 254-amino-acid polypeptide reads, in one-letter code: Sec-independent protein translocase protein TatCy (254 aa).

The next 6 membrane-spanning stretches (helical) occupy residues 24 to 44, 67 to 87, 112 to 132, 157 to 177, 187 to 207, and 212 to 232; these read IVALAFVVFFIAGFFLAKPII, LYVFMQFAFIIGIVLTSPVIL, VSILLFLAGLSFSYYILFPFV, FLLQLTIPFGLLFQMPVILMF, MFLAKIRKYAYFTLLVIAALI, and LLSHMMVTVPLLILYEISILI.

It belongs to the TatC family. Forms a complex with TatAy. Two types of complexes exist: one composed of TatAy and TatCy, and another composed only of TatAy.

It localises to the cell membrane. Functionally, part of the twin-arginine translocation (Tat) system that transports large folded proteins containing a characteristic twin-arginine motif in their signal peptide across membranes. Required for YwbN secretion. This chain is Sec-independent protein translocase protein TatCy, found in Bacillus subtilis (strain 168).